A 377-amino-acid chain; its full sequence is Carbamoyl phosphate synthase small chain (377 aa).

Residues 1-186 (MNTPALLVLA…LGKGFVTPDK (186 aa)) form a CPSase region. L-glutamine-binding residues include S47, G238, and G240. The Glutamine amidotransferase type-1 domain occupies 190-377 (HVVAYDFGVK…IGNMKAAKQA (188 aa)). C266 functions as the Nucleophile in the catalytic mechanism. Residues L267, Q270, N308, G310, and F311 each contribute to the L-glutamine site. Catalysis depends on residues H350 and E352.

The protein belongs to the CarA family. Composed of two chains; the small (or glutamine) chain promotes the hydrolysis of glutamine to ammonia, which is used by the large (or ammonia) chain to synthesize carbamoyl phosphate. Tetramer of heterodimers (alpha,beta)4.

The enzyme catalyses hydrogencarbonate + L-glutamine + 2 ATP + H2O = carbamoyl phosphate + L-glutamate + 2 ADP + phosphate + 2 H(+). It carries out the reaction L-glutamine + H2O = L-glutamate + NH4(+). It participates in amino-acid biosynthesis; L-arginine biosynthesis; carbamoyl phosphate from bicarbonate: step 1/1. Its pathway is pyrimidine metabolism; UMP biosynthesis via de novo pathway; (S)-dihydroorotate from bicarbonate: step 1/3. Small subunit of the glutamine-dependent carbamoyl phosphate synthetase (CPSase). CPSase catalyzes the formation of carbamoyl phosphate from the ammonia moiety of glutamine, carbonate, and phosphate donated by ATP, constituting the first step of 2 biosynthetic pathways, one leading to arginine and/or urea and the other to pyrimidine nucleotides. The small subunit (glutamine amidotransferase) binds and cleaves glutamine to supply the large subunit with the substrate ammonia. This is Carbamoyl phosphate synthase small chain from Neisseria gonorrhoeae.